The following is a 131-amino-acid chain: Con-Ins Q1 (131 aa).

The N-terminal stretch at 1–24 (MTTSSYFLLVALGLLLYLCQSSFG) is a signal peptide. Disulfide bonds link C29–C107, C41–C110, C53–C123, and C109–C114. The propeptide at 59–92 (LQGGTDDARKKRGRASLLRKRRGFLSMLKARAKR) is c peptide. Position 118 is a 4-carboxyglutamate; partial (E118). S130 bears the Serine amide mark.

Belongs to the insulin family. As to quaternary structure, heterodimer of A and B chains; disulfide-linked. As to expression, expressed by the venom gland.

Its subcellular location is the secreted. This venom insulin facilitates prey capture by rapidly inducing hypoglycemic shock. Intraperitoneal injection of this peptide into zebrafish lowers blood glucose with the same potency than human insulin. In vivo, when applied to water, this peptide reduces overall locomotor activity of zebrafish larvae, observed as a significant decrease in the percentage of time spent swimming and movement frequency. The sequence is that of Con-Ins Q1 from Conus quercinus (Oak cone).